Here is a 361-residue protein sequence, read N- to C-terminus: Peptide chain release factor 1 (361 aa).

N5-methylglutamine is present on glutamine 237. Basic and acidic residues predominate over residues 287–297 (KQQKEQSDTRK). Positions 287–313 (KQQKEQSDTRKSLVGSGDRSERIRTYN) are disordered.

The protein belongs to the prokaryotic/mitochondrial release factor family. Post-translationally, methylated by PrmC. Methylation increases the termination efficiency of RF1.

It is found in the cytoplasm. Functionally, peptide chain release factor 1 directs the termination of translation in response to the peptide chain termination codons UAG and UAA. The chain is Peptide chain release factor 1 from Francisella tularensis subsp. holarctica (strain FTNF002-00 / FTA).